A 115-amino-acid polypeptide reads, in one-letter code: Ribonuclease P protein component (115 aa).

It belongs to the RnpA family. Consists of a catalytic RNA component (M1 or rnpB) and a protein subunit.

It catalyses the reaction Endonucleolytic cleavage of RNA, removing 5'-extranucleotides from tRNA precursor.. RNaseP catalyzes the removal of the 5'-leader sequence from pre-tRNA to produce the mature 5'-terminus. It can also cleave other RNA substrates such as 4.5S RNA. The protein component plays an auxiliary but essential role in vivo by binding to the 5'-leader sequence and broadening the substrate specificity of the ribozyme. This is Ribonuclease P protein component from Bacillus cereus (strain B4264).